Here is a 159-residue protein sequence, read N- to C-terminus: MKRVAVLLKTVMCEFLKCDYNGYDRIISLLRRILTLICTPNLNGLTIKRVIDSMQSLEYIKQTCNFKLQMCISSMAFKRNNALQNCNHYAWCDDHCSDIGRPMTTVRGQCSKCTKPHLMRWLLLHYDNPYPSNSEFYDLSAATGLTRTQLRNWFSNRRR.

The segment at residues 103 to 159 is a DNA-binding region (homeobox; TALE-type; partial); sequence MTTVRGQCSKCTKPHLMRWLLLHYDNPYPSNSEFYDLSAATGLTRTQLRNWFSNRRR.

Belongs to the TALE/M-ATYP homeobox family.

It is found in the nucleus. Functionally, mating type proteins are sequence specific DNA-binding proteins that act as master switches in yeast differentiation by controlling gene expression in a cell type-specific fashion. Required for meiosis, but plays no role in conjugation. This is Mating-type P-specific polypeptide Pi (matPi) from Schizosaccharomyces kambucha (Fission yeast).